Reading from the N-terminus, the 482-residue chain is tRNA sulfurtransferase (482 aa).

Positions 61-165 constitute a THUMP domain; sequence LAIRDALTRI…DDRLLLIKGR (105 aa). Residues 183–184, Lys-265, Gly-287, and Gln-296 each bind ATP; that span reads LI. The cysteines at positions 344 and 456 are disulfide-linked. The 79-residue stretch at 404–482 folds into the Rhodanese domain; the sequence is FGPNDVILDI…GFNNVKVYRP (79 aa). The Cysteine persulfide intermediate role is filled by Cys-456.

The protein belongs to the ThiI family.

It localises to the cytoplasm. It carries out the reaction [ThiI sulfur-carrier protein]-S-sulfanyl-L-cysteine + a uridine in tRNA + 2 reduced [2Fe-2S]-[ferredoxin] + ATP + H(+) = [ThiI sulfur-carrier protein]-L-cysteine + a 4-thiouridine in tRNA + 2 oxidized [2Fe-2S]-[ferredoxin] + AMP + diphosphate. It catalyses the reaction [ThiS sulfur-carrier protein]-C-terminal Gly-Gly-AMP + S-sulfanyl-L-cysteinyl-[cysteine desulfurase] + AH2 = [ThiS sulfur-carrier protein]-C-terminal-Gly-aminoethanethioate + L-cysteinyl-[cysteine desulfurase] + A + AMP + 2 H(+). The protein operates within cofactor biosynthesis; thiamine diphosphate biosynthesis. Functionally, catalyzes the ATP-dependent transfer of a sulfur to tRNA to produce 4-thiouridine in position 8 of tRNAs, which functions as a near-UV photosensor. Also catalyzes the transfer of sulfur to the sulfur carrier protein ThiS, forming ThiS-thiocarboxylate. This is a step in the synthesis of thiazole, in the thiamine biosynthesis pathway. The sulfur is donated as persulfide by IscS. In Escherichia coli O45:K1 (strain S88 / ExPEC), this protein is tRNA sulfurtransferase.